We begin with the raw amino-acid sequence, 578 residues long: Matrix metalloproteinase-17 (578 aa).

Disordered regions lie at residues 1–22 (MGRR…PGPG) and 107–133 (PRCS…TKWS). An N-terminal signal peptide occupies residues 1 to 39 (MGRRPRGPGSPRGPGPPRPGPGLPPLLLVLALAAHGGCA). The span at 11-22 (PRGPGPPRPGPG) shows a compositional bias: pro residues. The propeptide occupies 40 to 124 (APAPRAEDLS…PPGAQSRRKR (85 aa)). The short motif at 107–114 (PRCSLPDL) is the Cysteine switch element. Cys109 lines the Zn(2+) pocket. A glycan (N-linked (GlcNAc...) asparagine) is linked at Asn136. Residue His247 participates in Zn(2+) binding. Residue Glu248 is part of the active site. Residues His251 and His257 each contribute to the Zn(2+) site. The segment at 301–334 (PTAQLDTPEPEEPPLLPEPPNNRSSTPPQKDVPH) is disordered. Residue Asn322 is glycosylated (N-linked (GlcNAc...) asparagine). 4 Hemopexin repeats span residues 333-382 (PHRC…WRGL), 386-432 (LDSV…SLPP), 436-479 (DAVF…WRGV), and 480-527 (PSML…WLVC). Residues Cys336 and Cys527 are joined by a disulfide bond. Ser558 carries GPI-anchor amidated serine lipidation. The propeptide at 559-578 (DAHRLALPSLLLLTPLLWGL) is removed in mature form.

This sequence belongs to the peptidase M10A family. Requires Zn(2+) as cofactor. Ca(2+) is required as a cofactor. In terms of processing, the precursor is cleaved by a furin endopeptidase. In terms of tissue distribution, expressed by monocytes and macrophages.

It localises to the cell membrane. Its subcellular location is the secreted. The protein localises to the extracellular space. It is found in the extracellular matrix. Functionally, endopeptidase that degrades various components of the extracellular matrix, such as fibrin. May be involved in the activation of membrane-bound precursors of growth factors or inflammatory mediators, such as tumor necrosis factor-alpha. May also be involved in tumoral process. Not obvious if able to proteolytically activate progelatinase A. Does not hydrolyze collagen types I, II, III, IV and V, gelatin, fibronectin, laminin, decorin nor alpha1-antitrypsin. This is Matrix metalloproteinase-17 (Mmp17) from Mus musculus (Mouse).